The following is a 169-amino-acid chain: Ribosome maturation factor RimM (169 aa).

Positions 93–166 constitute a PRC barrel domain; that stretch reads GEHEFYYHEI…RIQITPLPGL (74 aa).

This sequence belongs to the RimM family. In terms of assembly, binds ribosomal protein uS19.

The protein localises to the cytoplasm. Functionally, an accessory protein needed during the final step in the assembly of 30S ribosomal subunit, possibly for assembly of the head region. Essential for efficient processing of 16S rRNA. May be needed both before and after RbfA during the maturation of 16S rRNA. It has affinity for free ribosomal 30S subunits but not for 70S ribosomes. This Exiguobacterium sibiricum (strain DSM 17290 / CCUG 55495 / CIP 109462 / JCM 13490 / 255-15) protein is Ribosome maturation factor RimM.